A 560-amino-acid chain; its full sequence is Dihydroxy-acid dehydratase (560 aa).

Asp-80 is a Mg(2+) binding site. Cys-121 lines the [2Fe-2S] cluster pocket. Mg(2+) is bound by residues Asp-122 and Lys-123. Lys-123 is subject to N6-carboxylysine. Cys-194 is a binding site for [2Fe-2S] cluster. Glu-447 serves as a coordination point for Mg(2+). Ser-473 acts as the Proton acceptor in catalysis.

The protein belongs to the IlvD/Edd family. Homodimer. [2Fe-2S] cluster is required as a cofactor. It depends on Mg(2+) as a cofactor.

The catalysed reaction is (2R)-2,3-dihydroxy-3-methylbutanoate = 3-methyl-2-oxobutanoate + H2O. The enzyme catalyses (2R,3R)-2,3-dihydroxy-3-methylpentanoate = (S)-3-methyl-2-oxopentanoate + H2O. It functions in the pathway amino-acid biosynthesis; L-isoleucine biosynthesis; L-isoleucine from 2-oxobutanoate: step 3/4. Its pathway is amino-acid biosynthesis; L-valine biosynthesis; L-valine from pyruvate: step 3/4. In terms of biological role, functions in the biosynthesis of branched-chain amino acids. Catalyzes the dehydration of (2R,3R)-2,3-dihydroxy-3-methylpentanoate (2,3-dihydroxy-3-methylvalerate) into 2-oxo-3-methylpentanoate (2-oxo-3-methylvalerate) and of (2R)-2,3-dihydroxy-3-methylbutanoate (2,3-dihydroxyisovalerate) into 2-oxo-3-methylbutanoate (2-oxoisovalerate), the penultimate precursor to L-isoleucine and L-valine, respectively. This Chlorobaculum tepidum (strain ATCC 49652 / DSM 12025 / NBRC 103806 / TLS) (Chlorobium tepidum) protein is Dihydroxy-acid dehydratase.